A 72-amino-acid polypeptide reads, in one-letter code: Large ribosomal subunit protein bL31c (72 aa).

The protein belongs to the bacterial ribosomal protein bL31 family. Type A subfamily. In terms of assembly, part of the 50S ribosomal subunit.

The protein resides in the plastid. It is found in the chloroplast. In terms of biological role, binds the 23S rRNA. The chain is Large ribosomal subunit protein bL31c (rpl31) from Phaeodactylum tricornutum (strain CCAP 1055/1).